The sequence spans 227 residues: NADH-quinone oxidoreductase subunit C (227 aa).

This sequence belongs to the complex I 30 kDa subunit family. In terms of assembly, NDH-1 is composed of 14 different subunits. Subunits NuoB, C, D, E, F, and G constitute the peripheral sector of the complex.

It is found in the cell inner membrane. The catalysed reaction is a quinone + NADH + 5 H(+)(in) = a quinol + NAD(+) + 4 H(+)(out). Functionally, NDH-1 shuttles electrons from NADH, via FMN and iron-sulfur (Fe-S) centers, to quinones in the respiratory chain. The immediate electron acceptor for the enzyme in this species is believed to be ubiquinone. Couples the redox reaction to proton translocation (for every two electrons transferred, four hydrogen ions are translocated across the cytoplasmic membrane), and thus conserves the redox energy in a proton gradient. This Legionella pneumophila (strain Lens) protein is NADH-quinone oxidoreductase subunit C.